The following is a 426-amino-acid chain: MLDPKLVRTQPQEVAARLATRGFQLDVARIEALEEQRKSVQTRTEQLQAERNARSKAIGQAKQRGEDIAPLLADVDRMGSELEEGKRQLDAIQGELDAMLLGIPNLPHESVPVGADEDANVEVRRWGTPKTFDFEVKDHVALGERHGWLDFETAAKLSGARFALMRGPIARLHRALAQFMINLHTAEHGYEEAYTPYLVQAPALQGTGQLPKFEEDLFKIGRDGEADLYLIPTAEVSLTNIVSGQILDAKQLPLKFVAHTPCFRSEAGASGRDTRGMIRQHQFDKVEMVQIVDPATSYEALEGLTANAERVLQLLELPYRVLALCTGDMGFGATKTYDLEVWVPSQDKYREISSCSNCGDFQARRMQARYRNPETGKPELVHTLNGSGLAVGRTLVAVLENYQQADGSIRVPEVLKPYMAGIEVIG.

233–235 (TAE) serves as a coordination point for L-serine. 264-266 (RSE) is a binding site for ATP. Glutamate 287 contacts L-serine. 351–354 (EISS) contributes to the ATP binding site. Serine 387 contacts L-serine.

It belongs to the class-II aminoacyl-tRNA synthetase family. Type-1 seryl-tRNA synthetase subfamily. As to quaternary structure, homodimer. The tRNA molecule binds across the dimer.

It is found in the cytoplasm. The catalysed reaction is tRNA(Ser) + L-serine + ATP = L-seryl-tRNA(Ser) + AMP + diphosphate + H(+). It carries out the reaction tRNA(Sec) + L-serine + ATP = L-seryl-tRNA(Sec) + AMP + diphosphate + H(+). The protein operates within aminoacyl-tRNA biosynthesis; selenocysteinyl-tRNA(Sec) biosynthesis; L-seryl-tRNA(Sec) from L-serine and tRNA(Sec): step 1/1. Its function is as follows. Catalyzes the attachment of serine to tRNA(Ser). Is also able to aminoacylate tRNA(Sec) with serine, to form the misacylated tRNA L-seryl-tRNA(Sec), which will be further converted into selenocysteinyl-tRNA(Sec). The sequence is that of Serine--tRNA ligase from Pseudomonas aeruginosa (strain LESB58).